The primary structure comprises 283 residues: ATP phosphoribosyltransferase (283 aa).

It belongs to the ATP phosphoribosyltransferase family. Long subfamily. Requires Mg(2+) as cofactor.

It localises to the cytoplasm. The enzyme catalyses 1-(5-phospho-beta-D-ribosyl)-ATP + diphosphate = 5-phospho-alpha-D-ribose 1-diphosphate + ATP. Its pathway is amino-acid biosynthesis; L-histidine biosynthesis; L-histidine from 5-phospho-alpha-D-ribose 1-diphosphate: step 1/9. Its activity is regulated as follows. Feedback inhibited by histidine. In terms of biological role, catalyzes the condensation of ATP and 5-phosphoribose 1-diphosphate to form N'-(5'-phosphoribosyl)-ATP (PR-ATP). Has a crucial role in the pathway because the rate of histidine biosynthesis seems to be controlled primarily by regulation of HisG enzymatic activity. The polypeptide is ATP phosphoribosyltransferase (Rhodococcus jostii (strain RHA1)).